The chain runs to 56 residues: Ovomucoid (56 aa).

One can recognise a Kazal-like domain in the interval 6–56 (VDCSEYPKPDCTLEYRPLCGSDNKTYASKCNFCNAVVESNGTLTLSHFGKC). 3 disulfides stabilise this stretch: C8/C38, C16/C35, and C24/C56. N-linked (GlcNAc...) asparagine glycosylation occurs at N45.

The protein resides in the secreted. The polypeptide is Ovomucoid (Callipepla squamata pallida (Blue scaled quail)).